Consider the following 461-residue polypeptide: Cysteine--tRNA ligase (461 aa).

Cys30 is a Zn(2+) binding site. A 'HIGH' region motif is present at residues 32-42 (VTIYDLCHIGH). Positions 211, 236, and 240 each coordinate Zn(2+). The 'KMSKS' region signature appears at 268-272 (KMSKS). Lys271 serves as a coordination point for ATP.

This sequence belongs to the class-I aminoacyl-tRNA synthetase family. Monomer. Zn(2+) serves as cofactor.

The protein resides in the cytoplasm. It catalyses the reaction tRNA(Cys) + L-cysteine + ATP = L-cysteinyl-tRNA(Cys) + AMP + diphosphate. This Shewanella putrefaciens (strain CN-32 / ATCC BAA-453) protein is Cysteine--tRNA ligase.